Here is a 367-residue protein sequence, read N- to C-terminus: Lipoyl synthase 2, chloroplastic (367 aa).

[4Fe-4S] cluster contacts are provided by Cys84, Cys89, Cys95, Cys121, Cys125, Cys128, and Ser336. The Radical SAM core domain maps to 104 to 325; that stretch reads GEGDGIATAT…KEYGESVGFR (222 aa).

This sequence belongs to the radical SAM superfamily. Lipoyl synthase family. The cofactor is [4Fe-4S] cluster.

The protein localises to the plastid. Its subcellular location is the chloroplast. It catalyses the reaction [[Fe-S] cluster scaffold protein carrying a second [4Fe-4S](2+) cluster] + N(6)-octanoyl-L-lysyl-[protein] + 2 oxidized [2Fe-2S]-[ferredoxin] + 2 S-adenosyl-L-methionine + 4 H(+) = [[Fe-S] cluster scaffold protein] + N(6)-[(R)-dihydrolipoyl]-L-lysyl-[protein] + 4 Fe(3+) + 2 hydrogen sulfide + 2 5'-deoxyadenosine + 2 L-methionine + 2 reduced [2Fe-2S]-[ferredoxin]. It participates in protein modification; protein lipoylation via endogenous pathway; protein N(6)-(lipoyl)lysine from octanoyl-[acyl-carrier-protein]: step 2/2. Catalyzes the radical-mediated insertion of two sulfur atoms into the C-6 and C-8 positions of the octanoyl moiety bound to the lipoyl domains of lipoate-dependent enzymes, thereby converting the octanoylated domains into lipoylated derivatives. In Zea mays (Maize), this protein is Lipoyl synthase 2, chloroplastic.